The sequence spans 61 residues: Large ribosomal subunit protein bL28 (61 aa).

This sequence belongs to the bacterial ribosomal protein bL28 family.

This Nautilia profundicola (strain ATCC BAA-1463 / DSM 18972 / AmH) protein is Large ribosomal subunit protein bL28.